The sequence spans 453 residues: AP-4 complex subunit mu-1 (453 aa).

In terms of domain architecture, MHD spans 184 to 452 (KNEVFLDVVE…LSHSDAYVIR (269 aa)).

Belongs to the adaptor complexes medium subunit family. As to quaternary structure, adaptor protein complex 4 (AP-4) is a heterotetramer composed of two large adaptins (epsilon-type subunit AP4E1 and beta-type subunit AP4B1), a medium adaptin (mu-type subunit AP4M1) and a small adaptin (sigma-type AP4S1). Interacts with tyrosine-based sorting signals on the cytoplasmic tail of cargo proteins such as APP, ATG9A, LAMP2 and NAGPA. Interacts with the C-terminal domain of GRID2. Interacts with GRIA1 and GRIA2; the interaction is indirect via CACNG3. Interacts with CACNG3; CACNG3 associates GRIA1 and GRIA2 with the adaptor protein complex 4 (AP-4) to target them to the somatodendritic compartment of neurons. Interacts with HOOK1 and HOOK2; the interactions are direct, mediate the interaction between FTS-Hook-FHIP (FHF) complex and AP-4 and the perinuclear distribution of AP-4. Ubiquitous. Highly expressed in testis and lowly expressed in brain and lung.

The protein resides in the golgi apparatus. Its subcellular location is the trans-Golgi network membrane. It is found in the early endosome. Component of the adaptor protein complex 4 (AP-4). Adaptor protein complexes are vesicle coat components involved both in vesicle formation and cargo selection. They control the vesicular transport of proteins in different trafficking pathways. AP-4 forms a non clathrin-associated coat on vesicles departing the trans-Golgi network (TGN) and may be involved in the targeting of proteins from the trans-Golgi network (TGN) to the endosomal-lysosomal system. It is also involved in protein sorting to the basolateral membrane in epithelial cells and the proper asymmetric localization of somatodendritic proteins in neurons. Within AP-4, the mu-type subunit AP4M1 is directly involved in the recognition and binding of tyrosine-based sorting signals found in the cytoplasmic part of cargos. The adaptor protein complex 4 (AP-4) may also recognize other types of sorting signal. This is AP-4 complex subunit mu-1 from Homo sapiens (Human).